Consider the following 258-residue polypeptide: L-aspartate dehydrogenase 1 (258 aa).

2 residues coordinate NAD(+): Ala121 and Asn181. Residue His211 is part of the active site.

Belongs to the L-aspartate dehydrogenase family.

It carries out the reaction L-aspartate + NADP(+) + H2O = oxaloacetate + NH4(+) + NADPH + H(+). The catalysed reaction is L-aspartate + NAD(+) + H2O = oxaloacetate + NH4(+) + NADH + H(+). It participates in cofactor biosynthesis; NAD(+) biosynthesis; iminoaspartate from L-aspartate (dehydrogenase route): step 1/1. In terms of biological role, specifically catalyzes the NAD or NADP-dependent dehydrogenation of L-aspartate to iminoaspartate. This is L-aspartate dehydrogenase 1 from Bordetella parapertussis (strain 12822 / ATCC BAA-587 / NCTC 13253).